Consider the following 298-residue polypeptide: NAD kinase (298 aa).

Catalysis depends on D80, which acts as the Proton acceptor. NAD(+) contacts are provided by residues 80 to 81 (DG), 154 to 155 (ND), R182, D184, 195 to 200 (TAYALS), A219, and Q253.

The protein belongs to the NAD kinase family. It depends on a divalent metal cation as a cofactor.

The protein localises to the cytoplasm. It catalyses the reaction NAD(+) + ATP = ADP + NADP(+) + H(+). Involved in the regulation of the intracellular balance of NAD and NADP, and is a key enzyme in the biosynthesis of NADP. Catalyzes specifically the phosphorylation on 2'-hydroxyl of the adenosine moiety of NAD to yield NADP. The polypeptide is NAD kinase (Delftia acidovorans (strain DSM 14801 / SPH-1)).